A 596-amino-acid chain; its full sequence is Nitrite reductase (596 aa).

Positions 1-29 are cleaved as a signal peptide; that stretch reads MRQRTPFARPGLLASAALALVLGPLAASA. Residues 30-76 are N-terminal tail; it reads QEQVAPPKDPAAALEDHKTRTDNRYEPSLDNLAQQDVAAPGAPEGVS. Residue His-46 coordinates heme c. Heme d1-binding residues include Tyr-54 and Ser-57. The 86-residue stretch at 77–162 folds into the Cytochrome c domain; it reads ALSDAQYNEA…ANYLLLDPAA (86 aa). Heme c is bound by residues Cys-94, Cys-97, His-98, Lys-108, and Tyr-122. Trp-138, Arg-203, His-229, Arg-232, Arg-245, Arg-272, Tyr-292, Arg-420, Gln-536, and Thr-583 together coordinate heme d1. The D1-heme domain stretch occupies residues 163-596; the sequence is PPEFGMKEMR…NVYNTMTDTY (434 aa).

Homodimer. Heme c is required as a cofactor. Requires heme as cofactor.

The protein localises to the periplasm. The catalysed reaction is nitric oxide + Fe(III)-[cytochrome c] + H2O = Fe(II)-[cytochrome c] + nitrite + 2 H(+). The enzyme catalyses A + NH4(+) + H2O = hydroxylamine + AH2 + H(+). This is Nitrite reductase (nirS) from Paracoccus pantotrophus (Thiosphaera pantotropha).